The sequence spans 423 residues: D-tagatose-1,6-bisphosphate aldolase subunit GatZ (423 aa).

Belongs to the GatZ/KbaZ family. GatZ subfamily. As to quaternary structure, forms a complex with GatY.

The protein operates within carbohydrate metabolism; D-tagatose 6-phosphate degradation; D-glyceraldehyde 3-phosphate and glycerone phosphate from D-tagatose 6-phosphate: step 2/2. Its function is as follows. Component of the tagatose-1,6-bisphosphate aldolase GatYZ that is required for full activity and stability of the Y subunit. Could have a chaperone-like function for the proper and stable folding of GatY. When expressed alone, GatZ does not show any aldolase activity. Is involved in the catabolism of galactitol. In Salmonella enteritidis PT4 (strain P125109), this protein is D-tagatose-1,6-bisphosphate aldolase subunit GatZ.